A 788-amino-acid chain; its full sequence is Cell division cycle protein 27 homolog (788 aa).

The tract at residues 198–436 is disordered; it reads YLDSPASSLK…PLPSVASSLN (239 aa). Residues 217–229 show a composition bias toward low complexity; it reads GPSSSSAASTAEP. Composition is skewed to polar residues over residues 241–273, 293–303, and 319–360; these read RGTI…SRIN, SSVTGSRSSLF, and NRAN…NPVR. The span at 366–378 shows a compositional bias: low complexity; sequence ADAAAAANKTAKT. Polar residues predominate over residues 391–414; it reads VSRNSNLARSLSGSTNSVASTASE. TPR repeat units lie at residues 561–594, 596–628, 629–662, 664–696, and 731–764; these read PQSW…DKRF, YAYT…SPRD, YRAW…NPTN, AMLC…NPLD, and AFIF…DPRG.

It belongs to the APC3/CDC27 family. In terms of assembly, the APC/C complex is probably composed of at least 12 subunits: apc-2, apc-10, apc-11, cdc-26, emb-1, emb-27, emb-30, mat-1, mat-2, mat-3, such-1 and gfi-3. As to expression, expressed in the ventral nerve cord.

Its subcellular location is the nucleus. It participates in protein modification; protein ubiquitination. Its function is as follows. Probable component of the anaphase promoting complex/cyclosome (APC/C), a cell cycle-regulated E3 ubiquitin ligase that controls progression through mitosis and the G1 phase of the cell cycle. The APC/C complex acts by mediating ubiquitination and subsequent degradation of target proteins. Developmental role in early embryogenesis and the metaphase to anaphase transition in oocyte and spermatocyte meiosis and mitosis in germ cells. Required for embryonic anterior-posterior axis formation. Plays a role in regulating the abundance of glr-1 receptors in postmitotic neurons, which may in turn control animal locomotion. This is Cell division cycle protein 27 homolog from Caenorhabditis elegans.